Here is a 368-residue protein sequence, read N- to C-terminus: Homoserine dehydrogenase (368 aa).

NAD(+)-binding residues include Val12, Gly14, and Val15. NADP(+) is bound at residue Val15. NADPH is bound by residues Val15, Lys59, Thr95, Ser96, and Lys119. Position 95 (Thr95) interacts with NAD(+). Thr95 serves as a coordination point for NADP(+). NADP(+) is bound at residue Lys119. Residues Glu146, Val149, Ala151, and Leu153 each contribute to the Na(+) site. Residues Gly209 and Glu212 each coordinate NADP(+). Glu212 and Asp223 together coordinate L-homoserine. Lys227 (proton donor) is an active-site residue. Gly349 contacts NAD(+). Position 349 (Gly349) interacts with NADP(+). Residue Gly349 participates in NADPH binding.

Belongs to the homoserine dehydrogenase family. A metal cation is required as a cofactor.

The catalysed reaction is L-homoserine + NADP(+) = L-aspartate 4-semialdehyde + NADPH + H(+). The enzyme catalyses L-homoserine + NAD(+) = L-aspartate 4-semialdehyde + NADH + H(+). It functions in the pathway amino-acid biosynthesis; L-methionine biosynthesis via de novo pathway; L-homoserine from L-aspartate: step 3/3. It participates in amino-acid biosynthesis; L-threonine biosynthesis; L-threonine from L-aspartate: step 3/5. Catalyzes the conversion of L-aspartate-beta-semialdehyde (L-Asa) to L-homoserine (L-Hse), the third step in the biosynthesis of amino acids that derive from aspartate (the aspartate family of amino acids), including methioinine and threonine, the latter of which is a precursor to isoleucine; production of homoserine leads to a branch-point in the pathway as it can either be O-phosphorylated for processing to threonine, or O-acylated for processing to methionine. In Emericella nidulans (strain FGSC A4 / ATCC 38163 / CBS 112.46 / NRRL 194 / M139) (Aspergillus nidulans), this protein is Homoserine dehydrogenase.